We begin with the raw amino-acid sequence, 465 residues long: MAKRREKRGRRRQHRSHRKIQRIIDGADFINYMPDDILHHILSFIPTDLAMRTSVLSRRWRHVWCETPCLDIKLKHGETNQTLTSYTAPIITSFKLVMDLNDNTVPQVDSWIEFALSRNVQNLSVFVRDFTYTKTYRFPDIFYISSSLKQLDVTLDFFDMIPTCAVSWKSLRNLTLRFCQIPDESMHNILSGCPILESLTLDTCRLLERLDLSKSPNLRRLDINRQYRRTGPIAIVAPHIYYLRLTYSSTPSTIVDVSSLSEANLNIISDRLLSPLTADRYQTMALEMLSKFHNVKRLTVGETILQILSLAELRGVPFPTLKVQTLTVKTEFVRSVIPGISRLLQNSPGLKKLTLHTLQLSHDIMEMHPLKGLYPDQCWRSTCEVFPTSKEIYKMLGCNDATSKLVASFMNLVLRNAKTLERMVVWLGGIYFNGDAPWFEEELFDMVETLSHNNNVSILLKQSNC.

The region spanning 27-73 is the F-box domain; it reads ADFINYMPDDILHHILSFIPTDLAMRTSVLSRRWRHVWCETPCLDIK. LRR repeat units lie at residues 127-155, 178-203, 207-225, 278-302, 332-357, 402-427, and 447-465; these read VRDFTYTKTYRFPDIFYISSSLKQLDVTL, FCQIPDESMHNILSGCPILESLTLDT, LERLDLSKSPNLRRLDINR, ADRYQTMALEMLSKFHNVKRLTVGE, FVRSVIPGISRLLQNSPGLKKLTLHT, TSKLVASFMNLVLRNAKTLERMVVWL, and VETLSHNNNVSILLKQSNC.

This Arabidopsis thaliana (Mouse-ear cress) protein is Putative F-box/LRR-repeat protein At3g28410.